A 249-amino-acid polypeptide reads, in one-letter code: Probable transcriptional regulatory protein Minf_0651 (249 aa).

The protein belongs to the TACO1 family.

The protein localises to the cytoplasm. The polypeptide is Probable transcriptional regulatory protein Minf_0651 (Methylacidiphilum infernorum (isolate V4) (Methylokorus infernorum (strain V4))).